The sequence spans 102 residues: Large ribosomal subunit protein bL21 (102 aa).

This sequence belongs to the bacterial ribosomal protein bL21 family. As to quaternary structure, part of the 50S ribosomal subunit. Contacts protein L20.

Functionally, this protein binds to 23S rRNA in the presence of protein L20. This Campylobacter hominis (strain ATCC BAA-381 / DSM 21671 / CCUG 45161 / LMG 19568 / NCTC 13146 / CH001A) protein is Large ribosomal subunit protein bL21.